The following is a 357-amino-acid chain: Fluoren-9-ol dehydrogenase (357 aa).

NADP(+) contacts are provided by residues 36–67 (VTGG…TWDD) and Asp87. Tyr198 (proton acceptor) is an active-site residue. Lys202 is an NADP(+) binding site.

This sequence belongs to the short-chain dehydrogenases/reductases (SDR) family.

It carries out the reaction 9H-fluoren-9-ol + NADP(+) = 9H-fluoren-9-one + NADPH + H(+). The catalysed reaction is 9H-fluoren-9-ol + NAD(+) = 9H-fluoren-9-one + NADH + H(+). The protein operates within aromatic compound metabolism. Catalyzes the dehydrogenation of both 9-fluorenol and 1,1a-dihydroxy-1-hydro-9-fluorenone to produce 9-fluorenone and 2'-carboxy-2,3- dihydroxybiphenyl, respectively. This Terrabacter sp. (strain DBF63) protein is Fluoren-9-ol dehydrogenase.